Consider the following 453-residue polypeptide: Cysteine--tRNA ligase (453 aa).

A Zn(2+)-binding site is contributed by Cys-31. The short motif at 33–43 is the 'HIGH' region element; sequence PTVYDNPHIGN. 3 residues coordinate Zn(2+): Cys-213, His-238, and Glu-242. The 'KMSKS' region motif lies at 271 to 275; the sequence is KMAKS. Lys-274 contacts ATP.

This sequence belongs to the class-I aminoacyl-tRNA synthetase family. As to quaternary structure, monomer. Zn(2+) is required as a cofactor.

It localises to the cytoplasm. It catalyses the reaction tRNA(Cys) + L-cysteine + ATP = L-cysteinyl-tRNA(Cys) + AMP + diphosphate. The protein is Cysteine--tRNA ligase of Pelagibacter ubique (strain HTCC1062).